A 450-amino-acid chain; its full sequence is MSRRYFGTDGIRGRANGLITPELALKVGQAAGLAFQRGEHRHRVVIGKDTRLSGYMIENALVAGFTSVGMDVLLVGPMPTPAVAMLTKSMRADLGVMISASHNLFEDNGIKLFGPLGYKLSDDVEKQIELMLDESLDKKLAQSASLGRARRIDGVHDRYIEFAKRTLPRELSLEGLRVVIDCANGAAYKVVPEALWELGADVISIGVEPDGFNINKECGSTAPQALCAKVREMRADIGIALDGDADRVILVDERGHVVDGDQLLAVIGQSWKEDGRLAKPGVVATVMSNLGLERFLAGEGIALLRTPVGDRYVLEQMLKDGYNVGGESSGHIILSDFNTTGDGFVAALQVLAMVQKLGRPVSEVCHRFDPLPQILKNVRYRSGRPLDDSGVISAIQDGEKRLNGHGRLLIRPSGTEPVIRVMGEGDDHDVVEEVVDSIVDALGNAAAAAA.

Ser101 (phosphoserine intermediate) is an active-site residue. Positions 101, 242, 244, and 246 each coordinate Mg(2+). A Phosphoserine modification is found at Ser101.

It belongs to the phosphohexose mutase family. Mg(2+) serves as cofactor. In terms of processing, activated by phosphorylation.

It catalyses the reaction alpha-D-glucosamine 1-phosphate = D-glucosamine 6-phosphate. Its function is as follows. Catalyzes the conversion of glucosamine-6-phosphate to glucosamine-1-phosphate. In Rhodopseudomonas palustris (strain ATCC BAA-98 / CGA009), this protein is Phosphoglucosamine mutase.